A 164-amino-acid chain; its full sequence is Protein-export protein SecB (164 aa).

Belongs to the SecB family. Homotetramer, a dimer of dimers. One homotetramer interacts with 1 SecA dimer.

The protein localises to the cytoplasm. In terms of biological role, one of the proteins required for the normal export of preproteins out of the cell cytoplasm. It is a molecular chaperone that binds to a subset of precursor proteins, maintaining them in a translocation-competent state. It also specifically binds to its receptor SecA. This is Protein-export protein SecB from Nitrosococcus oceani (strain ATCC 19707 / BCRC 17464 / JCM 30415 / NCIMB 11848 / C-107).